Here is a 346-residue protein sequence, read N- to C-terminus: Methylthioribose-1-phosphate isomerase (346 aa).

Residues 54 to 56 (RGA), Arg91, and Gln192 contribute to the substrate site. The active-site Proton donor is Asp233. 243–244 (NK) is a binding site for substrate.

This sequence belongs to the eIF-2B alpha/beta/delta subunits family. MtnA subfamily.

The catalysed reaction is 5-(methylsulfanyl)-alpha-D-ribose 1-phosphate = 5-(methylsulfanyl)-D-ribulose 1-phosphate. Its pathway is amino-acid biosynthesis; L-methionine biosynthesis via salvage pathway; L-methionine from S-methyl-5-thio-alpha-D-ribose 1-phosphate: step 1/6. In terms of biological role, catalyzes the interconversion of methylthioribose-1-phosphate (MTR-1-P) into methylthioribulose-1-phosphate (MTRu-1-P). This Yersinia pseudotuberculosis serotype O:1b (strain IP 31758) protein is Methylthioribose-1-phosphate isomerase.